We begin with the raw amino-acid sequence, 288 residues long: Quinate/shikimate dehydrogenase (288 aa).

Positions 71 and 107 each coordinate substrate. Residues 132 to 135 (AGGA), 155 to 158 (NRRD), Lys205, 232 to 235 (CVYN), and Gly255 contribute to the NAD(+) site.

It belongs to the shikimate dehydrogenase family. In terms of assembly, homodimer.

The catalysed reaction is L-quinate + NAD(+) = 3-dehydroquinate + NADH + H(+). It carries out the reaction L-quinate + NADP(+) = 3-dehydroquinate + NADPH + H(+). The enzyme catalyses shikimate + NADP(+) = 3-dehydroshikimate + NADPH + H(+). It catalyses the reaction shikimate + NAD(+) = 3-dehydroshikimate + NADH + H(+). It participates in metabolic intermediate biosynthesis; chorismate biosynthesis; chorismate from D-erythrose 4-phosphate and phosphoenolpyruvate: step 4/7. Its function is as follows. The actual biological function of YdiB remains unclear, nor is it known whether 3-dehydroshikimate or quinate represents the natural substrate. Catalyzes the reversible NAD-dependent reduction of both 3-dehydroshikimate (DHSA) and 3-dehydroquinate to yield shikimate (SA) and quinate, respectively. It can use both NAD or NADP for catalysis, however it has higher catalytic efficiency with NAD. In Escherichia coli O7:K1 (strain IAI39 / ExPEC), this protein is Quinate/shikimate dehydrogenase.